The following is a 117-amino-acid chain: Hydrogenase maturation factor HypA (117 aa).

H2 is a binding site for Ni(2+). Residues C73, C76, C89, and C92 each contribute to the Zn(2+) site.

Belongs to the HypA/HybF family.

Its function is as follows. Involved in the maturation of [NiFe] hydrogenases. Required for nickel insertion into the metal center of the hydrogenase. This Shewanella baltica (strain OS185) protein is Hydrogenase maturation factor HypA.